The chain runs to 264 residues: S-adenosylmethionine decarboxylase proenzyme (264 aa).

The active-site Schiff-base intermediate with substrate; via pyruvic acid is serine 112. Serine 112 bears the Pyruvic acid (Ser); by autocatalysis mark. The Proton acceptor; for processing activity role is filled by histidine 117. Catalysis depends on cysteine 140, which acts as the Proton donor; for catalytic activity.

This sequence belongs to the prokaryotic AdoMetDC family. Type 2 subfamily. In terms of assembly, heterooctamer of four alpha and four beta chains arranged as a tetramer of alpha/beta heterodimers. The cofactor is pyruvate. Is synthesized initially as an inactive proenzyme. Formation of the active enzyme involves a self-maturation process in which the active site pyruvoyl group is generated from an internal serine residue via an autocatalytic post-translational modification. Two non-identical subunits are generated from the proenzyme in this reaction, and the pyruvate is formed at the N-terminus of the alpha chain, which is derived from the carboxyl end of the proenzyme. The post-translation cleavage follows an unusual pathway, termed non-hydrolytic serinolysis, in which the side chain hydroxyl group of the serine supplies its oxygen atom to form the C-terminus of the beta chain, while the remainder of the serine residue undergoes an oxidative deamination to produce ammonia and the pyruvoyl group blocking the N-terminus of the alpha chain.

The catalysed reaction is S-adenosyl-L-methionine + H(+) = S-adenosyl 3-(methylsulfanyl)propylamine + CO2. It functions in the pathway amine and polyamine biosynthesis; S-adenosylmethioninamine biosynthesis; S-adenosylmethioninamine from S-adenosyl-L-methionine: step 1/1. Its function is as follows. Catalyzes the decarboxylation of S-adenosylmethionine to S-adenosylmethioninamine (dcAdoMet), the propylamine donor required for the synthesis of the polyamines spermine and spermidine from the diamine putrescine. The sequence is that of S-adenosylmethionine decarboxylase proenzyme from Klebsiella pneumoniae (strain 342).